We begin with the raw amino-acid sequence, 491 residues long: Keratin, type I cytoskeletal 24 (491 aa).

Residues Met-1–Arg-23 are disordered. Residues Met-1–Ser-117 are head. The span at Gly-8–Arg-23 shows a compositional bias: low complexity. The segment at Glu-118–Trp-153 is coil 1A. The IF rod domain maps to Glu-118–Cys-432. Residues Tyr-154–Val-174 are linker 1. The segment at Ile-175–Leu-266 is coil 1B. Residues Gln-267–Leu-289 are linker 12. The interval Leu-290–Asp-428 is coil 2. The segment at Gly-429 to Lys-491 is tail.

It belongs to the intermediate filament family. In terms of assembly, heterotetramer of two type I and two type II keratins.

In Rattus norvegicus (Rat), this protein is Keratin, type I cytoskeletal 24 (Krt24).